A 573-amino-acid polypeptide reads, in one-letter code: Urease subunit alpha (573 aa).

Ni(2+)-binding residues include His139, His141, and Lys222. At Lys222 the chain carries N6-carboxylysine. His224 contacts substrate. Residues His251 and His277 each coordinate Ni(2+). His325 acts as the Proton donor in catalysis. Residue Asp365 coordinates Ni(2+).

The protein belongs to the metallo-dependent hydrolases superfamily. Urease alpha subunit family. Heterotrimer of UreA (gamma), UreB (beta) and UreC (alpha) subunits. Three heterotrimers associate to form the active enzyme. Requires Ni cation as cofactor. Post-translationally, carboxylation allows a single lysine to coordinate two nickel ions.

The protein resides in the cytoplasm. It carries out the reaction urea + 2 H2O + H(+) = hydrogencarbonate + 2 NH4(+). Its pathway is nitrogen metabolism; urea degradation; CO(2) and NH(3) from urea (urease route): step 1/1. This is Urease subunit alpha from Flavobacterium johnsoniae (strain ATCC 17061 / DSM 2064 / JCM 8514 / BCRC 14874 / CCUG 350202 / NBRC 14942 / NCIMB 11054 / UW101) (Cytophaga johnsonae).